The primary structure comprises 560 residues: MAKIISFDEESRRALERGVNALADAVKITLGPKGRNVLLEKKYGTPQIVNDGITVAKEIELEDPLENTGARLIQEVAAKTKDVAGDGTTTATVLVQALIKEGLKNVAAGSNPVSLKRGIDKTTEALVAEIAKVAKPVEGSAIAQVATVSAGNDEEVGAMIAQAVEKVTKDGVITVEESKSLTTELDVVEGMQIDRGYISPYFITNNERQTVELENVRILITDKKISSIQELVPVLEKVARLGQPLLIIAEDVEGDALATLVVNKARGVLSVAAIKAPGFGERRKALLQDIAILTDGQLISEEIGLSLDTASLEALGTAQKITIEKDNTTIVAGNTTKPEIQKRIAQIRRQLEETDSEYDSEKLQERIAKLAGGIAVIKVGAATETELKDRKLRIEDALNATKAAVAEGIVPGGGKTLIYLASKVDEIKKNFDEEEKIGADIVKRALEAPLRQIADNAGVEGSVIVSRVKDSDFNTGYNAATGEFEDLIAAGIIDPAKVVRSALQNAASIAGLVLTTEAIVVEKPEKKAAAPADAGMGGMGGMGGMGGMGGMGGMGGMGMF.

Residues 29 to 32, 86 to 90, Gly413, 478 to 480, and Asp494 contribute to the ATP site; these read TLGP, DGTTT, and NAA.

Belongs to the chaperonin (HSP60) family. In terms of assembly, forms a cylinder of 14 subunits composed of two heptameric rings stacked back-to-back. Interacts with the co-chaperonin GroES.

It localises to the cytoplasm. The enzyme catalyses ATP + H2O + a folded polypeptide = ADP + phosphate + an unfolded polypeptide.. In terms of biological role, together with its co-chaperonin GroES, plays an essential role in assisting protein folding. The GroEL-GroES system forms a nano-cage that allows encapsulation of the non-native substrate proteins and provides a physical environment optimized to promote and accelerate protein folding. In Trichormus variabilis (strain ATCC 29413 / PCC 7937) (Anabaena variabilis), this protein is Chaperonin GroEL 2.